Reading from the N-terminus, the 642-residue chain is MSNRREQRQQAQQFINELAGEAYPNSTRHYESGSRDDIRVAMRLIHQHDSLVGGTEDNPILEPNPPIPVYDTSGPYGDPKENIDVHKGLSPLRKTWIEERSDTRELDGVSSSFAKERENDIFTEDFRFIRSRKPLKAKAGKNVTQLHYARQGVITPEMEYIAIRENMGRQAIKDAELTQQHKGEHFGANLPETITPEFVRQEVAAGRAIIPCNINHPELEPMIIGRNFLVKINANIGNSAVTSSIEEEVEKLVWSTRWGADTIMDLSTGRNIHETREWLLRNSPVPLGTVPIYQALEKVNGVAEDLTWEMFKDTLIEQAEQGVDYFTIHAGVLLEYVHLTAKRVTGIVSRGGSIMAKWCLSHHQQSFLYEHFNDICEICAKYDVALSLGDGLRPGSVADANDDAQFSELRTLGELTKIAWEYDVQVMIEGPGHVPMHMIKENMEEQLKHCHEAPFYTLGPLTTDIAPGYDHFTSGIGAAMIGWYGCAMLCYVTPKEHLGLPNKEDVKQGLITYKIAAHAADLAKGHPGAQIRDNAMSKARFEFRWEDQFNLALDPHTARAYHDETLPQASGKVAHFCSMCGPKFCSMKISQEVRDVAKQAENLAPAQAAEKEKEKGMKDMANAFNKSGAELYHTADSKVELP.

Residues Asn-235, Met-264, Tyr-293, His-329, 349-351 (SRG), 390-393 (DGLR), and Glu-429 each bind substrate. His-433 is a Zn(2+) binding site. Tyr-456 contributes to the substrate binding site. His-497 provides a ligand contact to Zn(2+). Residues Cys-577, Cys-580, and Cys-585 each coordinate [4Fe-4S] cluster.

The protein belongs to the ThiC family. In terms of assembly, homodimer. [4Fe-4S] cluster is required as a cofactor.

The enzyme catalyses 5-amino-1-(5-phospho-beta-D-ribosyl)imidazole + S-adenosyl-L-methionine = 4-amino-2-methyl-5-(phosphooxymethyl)pyrimidine + CO + 5'-deoxyadenosine + formate + L-methionine + 3 H(+). It functions in the pathway cofactor biosynthesis; thiamine diphosphate biosynthesis. Its function is as follows. Catalyzes the synthesis of the hydroxymethylpyrimidine phosphate (HMP-P) moiety of thiamine from aminoimidazole ribotide (AIR) in a radical S-adenosyl-L-methionine (SAM)-dependent reaction. The polypeptide is Phosphomethylpyrimidine synthase (Alteromonas mediterranea (strain DSM 17117 / CIP 110805 / LMG 28347 / Deep ecotype)).